A 95-amino-acid polypeptide reads, in one-letter code: Aspartyl/glutamyl-tRNA(Asn/Gln) amidotransferase subunit C (95 aa).

The protein belongs to the GatC family. In terms of assembly, heterotrimer of A, B and C subunits.

It catalyses the reaction L-glutamyl-tRNA(Gln) + L-glutamine + ATP + H2O = L-glutaminyl-tRNA(Gln) + L-glutamate + ADP + phosphate + H(+). It carries out the reaction L-aspartyl-tRNA(Asn) + L-glutamine + ATP + H2O = L-asparaginyl-tRNA(Asn) + L-glutamate + ADP + phosphate + 2 H(+). Allows the formation of correctly charged Asn-tRNA(Asn) or Gln-tRNA(Gln) through the transamidation of misacylated Asp-tRNA(Asn) or Glu-tRNA(Gln) in organisms which lack either or both of asparaginyl-tRNA or glutaminyl-tRNA synthetases. The reaction takes place in the presence of glutamine and ATP through an activated phospho-Asp-tRNA(Asn) or phospho-Glu-tRNA(Gln). This Geobacter sulfurreducens (strain ATCC 51573 / DSM 12127 / PCA) protein is Aspartyl/glutamyl-tRNA(Asn/Gln) amidotransferase subunit C.